Here is a 321-residue protein sequence, read N- to C-terminus: Lipoyl synthase (321 aa).

Residues C68, C73, C79, C94, C98, C101, and S308 each contribute to the [4Fe-4S] cluster site. A Radical SAM core domain is found at F80–T297.

It belongs to the radical SAM superfamily. Lipoyl synthase family. The cofactor is [4Fe-4S] cluster.

The protein resides in the cytoplasm. It carries out the reaction [[Fe-S] cluster scaffold protein carrying a second [4Fe-4S](2+) cluster] + N(6)-octanoyl-L-lysyl-[protein] + 2 oxidized [2Fe-2S]-[ferredoxin] + 2 S-adenosyl-L-methionine + 4 H(+) = [[Fe-S] cluster scaffold protein] + N(6)-[(R)-dihydrolipoyl]-L-lysyl-[protein] + 4 Fe(3+) + 2 hydrogen sulfide + 2 5'-deoxyadenosine + 2 L-methionine + 2 reduced [2Fe-2S]-[ferredoxin]. It participates in protein modification; protein lipoylation via endogenous pathway; protein N(6)-(lipoyl)lysine from octanoyl-[acyl-carrier-protein]: step 2/2. Catalyzes the radical-mediated insertion of two sulfur atoms into the C-6 and C-8 positions of the octanoyl moiety bound to the lipoyl domains of lipoate-dependent enzymes, thereby converting the octanoylated domains into lipoylated derivatives. The chain is Lipoyl synthase from Pectobacterium atrosepticum (strain SCRI 1043 / ATCC BAA-672) (Erwinia carotovora subsp. atroseptica).